The sequence spans 344 residues: MSNLKWFWLFLKTRSNWIFWIVFLHLILLGMAYIDYDISIESIGFIVTLNLGLTAMFLIFTFLKEVKLYQHLYNNKEIEEIKHKDLAEDPFQKEVVNYLYRKLTSQKERVVEQQLHIQSTEQSLTEFVHDIKTPVTAMKLLIDQEEEGKRKKSLLYEWARINELLDKQLYLTRLESKNRDMYFEETSLKRLVIDEVQLTRHISQAKGIGYDLDLETNLDVYTDVKWCRMMIRQILSNSLKYSQGQDIIIRSYTNDGHVTLEIKDFGRGISHKDLPRIFERGFTSTVNRNETTSSGIGLYLVNSVKDQLGINVRVESTVGQGTTFVLTFPKQNELMARMTQVTTM.

Helical transmembrane passes span 18 to 38 (IFWI…DYDI) and 43 to 63 (IGFI…FTFL). Positions 126-332 (EFVHDIKTPV…TFVLTFPKQN (207 aa)) constitute a Histidine kinase domain. His-129 is modified (phosphohistidine; by autocatalysis).

Autophosphorylated.

It is found in the cell membrane. The catalysed reaction is ATP + protein L-histidine = ADP + protein N-phospho-L-histidine.. Its function is as follows. Member of the two-component regulatory system GraR/GraS involved in resistance against cationic antimicrobial peptides (CAMPs). GraS probably functions as a sensor protein kinase which is autophosphorylated at a histidine residue and transfers its phosphate group to GraR. The polypeptide is Sensor histidine kinase GraS (graS) (Staphylococcus haemolyticus (strain JCSC1435)).